Consider the following 365-residue polypeptide: Peptide chain release factor 2 (365 aa).

Position 252 is an N5-methylglutamine (glutamine 252).

Belongs to the prokaryotic/mitochondrial release factor family. In terms of processing, methylated by PrmC. Methylation increases the termination efficiency of RF2.

It is found in the cytoplasm. Functionally, peptide chain release factor 2 directs the termination of translation in response to the peptide chain termination codons UGA and UAA. In Pectobacterium atrosepticum (strain SCRI 1043 / ATCC BAA-672) (Erwinia carotovora subsp. atroseptica), this protein is Peptide chain release factor 2.